The chain runs to 377 residues: Nitric oxide reductase FlRd-NAD(+) reductase (377 aa).

It belongs to the FAD-dependent oxidoreductase family. It depends on FAD as a cofactor.

The protein localises to the cytoplasm. It catalyses the reaction 2 reduced [nitric oxide reductase rubredoxin domain] + NAD(+) + H(+) = 2 oxidized [nitric oxide reductase rubredoxin domain] + NADH. The protein operates within nitrogen metabolism; nitric oxide reduction. One of at least two accessory proteins for anaerobic nitric oxide (NO) reductase. Reduces the rubredoxin moiety of NO reductase. This Salmonella paratyphi C (strain RKS4594) protein is Nitric oxide reductase FlRd-NAD(+) reductase.